The sequence spans 707 residues: Caprin-1 (707 aa).

Low complexity-rich tracts occupy residues 1–15 (MPSA…SKSS) and 22–43 (GSSG…PATG). A disordered region spans residues 1–48 (MPSATSHSGSGSKSSGPPPPSGSSGSEAAAGAAAPASQHPATGTGAVQ). Position 2 is an N-acetylproline (P2). A Phosphoserine modification is found at S10. Positions 58–92 (VIDKKLRNLEKKKGKLDDYQERMNKGERLNQDQLD) form a coiled coil. Residue S113 is modified to Phosphoserine. The stretch at 123-151 (KTIKKTARREQLMREEAEQKRLKTVLELQ) forms a coiled coil. Residue R163 is modified to Omega-N-methylarginine. A compositionally biased stretch (low complexity) spans 325–335 (LQQQPQAASPS). The disordered stretch occupies residues 325–347 (LQQQPQAASPSVPEPHSLTPVAQ). S333 and S341 each carry phosphoserine. A G3BP1-binding region spans residues 358-379 (QDLMAQMQGPYNFIQDSMLDFE). Disordered stretches follow at residues 412–496 (ESRL…AGTS), 526–558 (PANE…EQTE), and 570–707 (TYHG…QQVN). A compositionally biased stretch (polar residues) spans 431–452 (PLVSSTSEGYTASQPLYQPSHA). Residues 453–462 (TEQRPQKEPM) show a composition bias toward basic and acidic residues. Residues 465-474 (IQATISLNTD) are compositionally biased toward polar residues. The span at 475–489 (QTTASSSLPAASQPQ) shows a compositional bias: low complexity. Polar residues-rich tracts occupy residues 533–552 (LKQQ…SQPH) and 572–603 (HGSQ…QPYY). Phosphotyrosine is present on Y623. Omega-N-methylarginine is present on residues R624 and R631. Phosphotyrosine is present on residues Y634 and Y637. At R638 the chain carries Omega-N-methylarginine. Positions 640 to 655 (SFSNTPNSGYSQSQFT) are enriched in polar residues. 2 O-linked (GlcNAc) serine glycosylation sites follow: S642 and S647. Y649, Y660, Y663, and Y668 each carry phosphotyrosine. 2 stretches are compositionally biased toward low complexity: residues 674–684 (RGSGQSGPRGA) and 695–707 (NRGM…QQVN). R696 carries the asymmetric dimethylarginine; alternate modification. R696 carries the omega-N-methylarginine; alternate modification.

This sequence belongs to the caprin family. In terms of assembly, may form homomultimers. Interacts with G3BP1; interaction is direct and promotes stress granule formation. Interacts with G3BP2; interaction is direct and promotes stress granule formation. Interacts with PQBP1. Interacts with DDX3X. Interacts (when phosphorylated by EPHA4) with FMR1; interaction with FMR1 promotes formation of a membraneless compartment. Post-translationally, tyrosine phosphorylation by EPHA4 promotes interaction with FMR1 and liquid-liquid phase separation (LLPS) for the formation of a membraneless compartment that concentrates mRNAs with associated regulatory factors. O-glycosylated (O-GlcNAcylated), in a cell cycle-dependent manner. O-glycosylation by OGT inhibit ability to undergo liquid-liquid phase separation (LLPS). As to expression, highest expression in thymus, spleen and brain (at protein level). Lower levels in kidney, muscle and liver (at protein level).

The protein resides in the cytoplasm. It is found in the cytoplasmic ribonucleoprotein granule. The protein localises to the cytosol. Its subcellular location is the cell projection. It localises to the dendrite. The protein resides in the lamellipodium. With respect to regulation, ability to mediate liquid-liquid phase separation is regulated by ATP: moderate concentrations of ATP enhance phase separation, whereas high concentrations of ATP lead to inhibition of phase separation. In terms of biological role, mRNA-binding protein that acts as a regulator of mRNAs transport, translation and/or stability, and which is involved in neurogenesis, synaptic plasticity in neurons and cell proliferation and migration in multiple cell types. Plays an essential role in cytoplasmic stress granule formation. Acts as an mRNA regulator by mediating formation of some phase-separated membraneless compartment: undergoes liquid-liquid phase separation upon binding to target mRNAs, leading to assemble mRNAs into cytoplasmic ribonucleoprotein granules that concentrate mRNAs with associated regulatory factors. Undergoes liquid-liquid phase separation following phosphorylation and interaction with FMR1, promoting formation of cytoplasmic ribonucleoprotein granules that concentrate mRNAs with factors that inhibit translation and mediate deadenylation of target mRNAs. In these cytoplasmic ribonucleoprotein granules, CAPRIN1 mediates recruitment of CNOT7 deadenylase, leading to mRNA deadenylation and degradation. Binds directly and selectively to MYC and CCND2 mRNAs. In neuronal cells, directly binds to several mRNAs associated with RNA granules, including BDNF, CAMK2A, CREB1, MAP2, NTRK2 mRNAs, as well as to GRIN1 and KPNB1 mRNAs, but not to rRNAs. The polypeptide is Caprin-1 (Caprin1) (Mus musculus (Mouse)).